Here is a 92-residue protein sequence, read N- to C-terminus: Signal recognition particle 19 kDa protein (92 aa).

It belongs to the SRP19 family. In terms of assembly, part of the signal recognition particle protein translocation system, which is composed of SRP and FtsY. Archaeal SRP consists of a 7S RNA molecule of 300 nucleotides and two protein subunits: SRP54 and SRP19.

The protein localises to the cytoplasm. Involved in targeting and insertion of nascent membrane proteins into the cytoplasmic membrane. Binds directly to 7S RNA and mediates binding of the 54 kDa subunit of the SRP. The protein is Signal recognition particle 19 kDa protein of Halorubrum lacusprofundi (strain ATCC 49239 / DSM 5036 / JCM 8891 / ACAM 34).